Consider the following 421-residue polypeptide: Ribulose bisphosphate carboxylase large chain (421 aa).

Residues Asn68 and Thr118 each coordinate substrate. The active-site Proton acceptor is the Lys120. Lys122 is a binding site for substrate. Positions 146, 148, and 149 each coordinate Mg(2+). Position 146 is an N6-carboxylysine (Lys146). Catalysis depends on His239, which acts as the Proton acceptor. Substrate is bound by residues Arg240, His272, and Ser324.

Belongs to the RuBisCO large chain family. Type I subfamily. Heterohexadecamer of 8 large chains and 8 small chains; disulfide-linked. The disulfide link is formed within the large subunit homodimers. Mg(2+) is required as a cofactor. Post-translationally, the disulfide bond which can form in the large chain dimeric partners within the hexadecamer appears to be associated with oxidative stress and protein turnover.

It localises to the plastid. The protein resides in the chloroplast. It catalyses the reaction 2 (2R)-3-phosphoglycerate + 2 H(+) = D-ribulose 1,5-bisphosphate + CO2 + H2O. It carries out the reaction D-ribulose 1,5-bisphosphate + O2 = 2-phosphoglycolate + (2R)-3-phosphoglycerate + 2 H(+). Functionally, ruBisCO catalyzes two reactions: the carboxylation of D-ribulose 1,5-bisphosphate, the primary event in carbon dioxide fixation, as well as the oxidative fragmentation of the pentose substrate in the photorespiration process. Both reactions occur simultaneously and in competition at the same active site. This is Ribulose bisphosphate carboxylase large chain (rbcL) from Aegilops crassa (Persian goatgrass).